Here is a 118-residue protein sequence, read N- to C-terminus: Small ribosomal subunit protein uS13 (118 aa).

The tract at residues 94-118 (SLPLRGQRTKTNARTRKGPRKPIKK) is disordered.

Belongs to the universal ribosomal protein uS13 family. Part of the 30S ribosomal subunit. Forms a loose heterodimer with protein S19. Forms two bridges to the 50S subunit in the 70S ribosome.

Functionally, located at the top of the head of the 30S subunit, it contacts several helices of the 16S rRNA. In the 70S ribosome it contacts the 23S rRNA (bridge B1a) and protein L5 of the 50S subunit (bridge B1b), connecting the 2 subunits; these bridges are implicated in subunit movement. Contacts the tRNAs in the A and P-sites. The polypeptide is Small ribosomal subunit protein uS13 (Shewanella amazonensis (strain ATCC BAA-1098 / SB2B)).